A 441-amino-acid chain; its full sequence is Histidinol dehydrogenase homolog (441 aa).

A Zn(2+)-binding site is contributed by histidine 266. Active-site proton acceptor residues include glutamate 334 and histidine 335. Histidine 427 is a binding site for Zn(2+).

The protein belongs to the histidinol dehydrogenase family. Zn(2+) serves as cofactor.

This chain is Histidinol dehydrogenase homolog, found in Cereibacter sphaeroides (strain ATCC 17023 / DSM 158 / JCM 6121 / CCUG 31486 / LMG 2827 / NBRC 12203 / NCIMB 8253 / ATH 2.4.1.) (Rhodobacter sphaeroides).